The chain runs to 317 residues: MTSRTRVTWPSPPRPLPVPAAAAVAFGAKGTDPAEARSSRGIEEAGPRAHGRAGREPERRRSRQQRRGGLQARRSTLLKTCARARATAPGAMKMVAPWTRFYSNSCCLCCHVRTGTILLGVWYLIINAVVLLILLSALADPDQYNFSSSELGGDFEFMDDANMCIAIAISLLMILICAMATYGAYKQRAAWIIPFFCYQIFDFALNMLVAITVLIYPNSIQEYIRQLPPNFPYRDDVMSVNPTCLVLIILLFISIILTFKGYLISCVWNCYRYINGRNSSDVLVYVTSNDTTVLLPPYDDATVNGAAKEPPPPYVSA.

Residues 25–73 (AFGAKGTDPAEARSSRGIEEAGPRAHGRAGREPERRRSRQQRRGGLQAR) form a disordered region. Positions 32-59 (DPAEARSSRGIEEAGPRAHGRAGREPER) are enriched in basic and acidic residues. A run of 4 helical transmembrane segments spans residues 117 to 137 (ILLG…LLSA), 163 to 183 (MCIA…ATYG), 191 to 211 (WIIP…LVAI), and 244 to 264 (CLVL…GYLI). The tract at residues 205–221 (LNMLVAITVLIYPNSIQ) is required for NEDD4 interaction.

It belongs to the LAPTM4/LAPTM5 transporter family. As to quaternary structure, homooligomer; upon reaching the lysosomes. Interacts with MCOLN1. Interacts with NEDD4; may play a role in the lysosomal sorting of LAPTM4B; enhances HGS association with NEDD4; mediates inhibition of EGFR degradation. Interacts with PIP5K1C; promotes SNX5 association with LAPTM4B; kinase activity of PIP5K1C is required; interaction is regulated by phosphatidylinositol 4,5-bisphosphate generated by PIP5K1C. Interacts with HGS; promotes HGS ubiquitination. Interacts with SNX5. Interacts with SLC3A2 and SLC7A5; recruits SLC3A2 and SLC7A5 to lysosomes to promote leucine uptake into these organelles and is required for mTORC1 activation. Interacts with LRRC32; decreases TGFB1 production in regulatory T cells. Interacts with BECN1; competes with EGFR for LAPTM4B binding; regulates EGFR activity. Interacts with EGFR; positively correlates with EGFR activation. In terms of processing, undergoes proteolytic cleavage following delivery to the lysosomes. Ubiquitinated by NEDD4.

It is found in the endomembrane system. It localises to the late endosome membrane. The protein resides in the cell membrane. Its subcellular location is the cell projection. The protein localises to the lysosome membrane. It is found in the endosome membrane. It localises to the endosome. The protein resides in the multivesicular body membrane. Its subcellular location is the multivesicular body lumen. Its function is as follows. Required for optimal lysosomal function. Blocks EGF-stimulated EGFR intraluminal sorting and degradation. Conversely by binding with the phosphatidylinositol 4,5-bisphosphate, regulates its PIP5K1C interaction, inhibits HGS ubiquitination and relieves LAPTM4B inhibition of EGFR degradation. Recruits SLC3A2 and SLC7A5 (the Leu transporter) to the lysosome, promoting entry of leucine and other essential amino acid (EAA) into the lysosome, stimulating activation of proton-transporting vacuolar (V)-ATPase protein pump (V-ATPase) and hence mTORC1 activation. Plays a role as negative regulator of TGFB1 production in regulatory T cells. Binds ceramide and facilitates its exit from late endosome in order to control cell death pathways. This Homo sapiens (Human) protein is Lysosomal-associated transmembrane protein 4B.